The chain runs to 296 residues: MTTILTRPADGEGSVQVHQDPALNIQEETLVIAVYGKGGIGKSTTSSNLSAAFSKLGKRVLQIGCDPKHDSTFTLTHKMVPTVIDILEEVDFHSEELRPEDFVFTGFNGVQCVESGGPPAGTGCGGYVTGQTVKLLKEHHLLEDTDVVIFDVLGDVVCGGFAAPLQHANYCLIVTANDFDSIFAMNRIVQAIQAKAKNYKVRLGGVVANRSADTDQIDKFNERTGLRTMAHFRDVDAIRRSRLKKCTIFEMDDADEAVQAVQNEYLRLAQNMLDKVEPLEATSLKDREIFDLLGFD.

ATP is bound by residues 39-44 (GIGKST) and K68. S43 is a Mg(2+) binding site. C124 and C158 together coordinate [4Fe-4S] cluster. ATP is bound at residue 209 to 210 (NR).

Belongs to the NifH/BchL/ChlL family. As to quaternary structure, homodimer. Protochlorophyllide reductase is composed of three subunits; ChlL, ChlN and ChlB. Requires [4Fe-4S] cluster as cofactor.

The catalysed reaction is chlorophyllide a + oxidized 2[4Fe-4S]-[ferredoxin] + 2 ADP + 2 phosphate = protochlorophyllide a + reduced 2[4Fe-4S]-[ferredoxin] + 2 ATP + 2 H2O. Its pathway is porphyrin-containing compound metabolism; chlorophyll biosynthesis (light-independent). Component of the dark-operative protochlorophyllide reductase (DPOR) that uses Mg-ATP and reduced ferredoxin to reduce ring D of protochlorophyllide (Pchlide) to form chlorophyllide a (Chlide). This reaction is light-independent. The L component serves as a unique electron donor to the NB-component of the complex, and binds Mg-ATP. This is Light-independent protochlorophyllide reductase iron-sulfur ATP-binding protein from Synechococcus sp. (strain CC9605).